The primary structure comprises 738 residues: DNA repair and recombination protein RAD54-like (738 aa).

A disordered region spans residues 1–31 (MRRSLAPSQVAKRKQGPDSDDEEDWEPDMEP). Acidic residues predominate over residues 18–29 (DSDDEEDWEPDM). A Helicase ATP-binding domain is found at 164–339 (GRRIENSYGC…FSLVHFVNSG (176 aa)). 177-184 (DEMGLGKT) contributes to the ATP binding site. Positions 290–293 (DEGH) match the DEAH box motif. In terms of domain architecture, Helicase C-terminal spans 493-647 (LVLDYILAMT…CVVDEEQDVE (155 aa)). Phosphoserine is present on residues S566 and S567.

As to quaternary structure, homohexamer. Interacts with RAD51. Phosphorylated. Phosphorylations at Ser-566 and Ser-567 allow efficient removal of RAD51 filaments from DNA.

The enzyme catalyses ATP + H2O = ADP + phosphate + H(+). Functionally, plays an essential role in homologous recombination (HR) which is a major pathway for repairing DNA double-strand breaks (DSBs), single-stranded DNA (ssDNA) gaps, and stalled or collapsed replication forks. Acts as a molecular motor during the homology search and guides RAD51 ssDNA along a donor dsDNA thereby changing the homology search from the diffusion-based mechanism to a motor-guided mechanism. Also plays an essential role in RAD51-mediated synaptic complex formation which consists of three strands encased in a protein filament formed once homology is recognized. Once DNA strand exchange occured, dissociates RAD51 from nucleoprotein filaments formed on dsDNA. The protein is DNA repair and recombination protein RAD54-like (rad54l) of Danio rerio (Zebrafish).